Here is a 78-residue protein sequence, read N- to C-terminus: Large ribosomal subunit protein bL28 (78 aa).

The segment at 1–21 (MSRVCQVTGKRPMVGNNRSHA) is disordered.

It belongs to the bacterial ribosomal protein bL28 family.

The chain is Large ribosomal subunit protein bL28 from Shewanella halifaxensis (strain HAW-EB4).